The following is a 644-amino-acid chain: Acetyl-coenzyme A synthetase 2 (644 aa).

Residues 189 to 192 (RGGK), Thr-307, and Asn-331 each bind CoA. Residues 383–385 (GEP), 407–412 (DTWWQT), Asp-496, and Arg-511 contribute to the ATP site. Residue Ser-519 participates in CoA binding. Arg-522 lines the ATP pocket. Residues Val-533, His-535, and Val-538 each contribute to the Mg(2+) site. Lys-605 bears the N6-acetyllysine mark.

It belongs to the ATP-dependent AMP-binding enzyme family. The cofactor is Mg(2+). Post-translationally, acetylated. Deacetylation by the SIR2-homolog deacetylase activates the enzyme.

It carries out the reaction acetate + ATP + CoA = acetyl-CoA + AMP + diphosphate. In terms of biological role, catalyzes the conversion of acetate into acetyl-CoA (AcCoA), an essential intermediate at the junction of anabolic and catabolic pathways. AcsA undergoes a two-step reaction. In the first half reaction, AcsA combines acetate with ATP to form acetyl-adenylate (AcAMP) intermediate. In the second half reaction, it can then transfer the acetyl group from AcAMP to the sulfhydryl group of CoA, forming the product AcCoA. The sequence is that of Acetyl-coenzyme A synthetase 2 from Pseudomonas putida (strain ATCC 47054 / DSM 6125 / CFBP 8728 / NCIMB 11950 / KT2440).